The primary structure comprises 204 residues: FMN-dependent NADH:quinone oxidoreductase (204 aa).

FMN-binding positions include Ser-9, 15–17 (SVS), and 97–100 (MYNF).

It belongs to the azoreductase type 1 family. As to quaternary structure, homodimer. FMN is required as a cofactor.

It carries out the reaction 2 a quinone + NADH + H(+) = 2 a 1,4-benzosemiquinone + NAD(+). It catalyses the reaction N,N-dimethyl-1,4-phenylenediamine + anthranilate + 2 NAD(+) = 2-(4-dimethylaminophenyl)diazenylbenzoate + 2 NADH + 2 H(+). In terms of biological role, quinone reductase that provides resistance to thiol-specific stress caused by electrophilic quinones. Also exhibits azoreductase activity. Catalyzes the reductive cleavage of the azo bond in aromatic azo compounds to the corresponding amines. This is FMN-dependent NADH:quinone oxidoreductase from Methylobacterium radiotolerans (strain ATCC 27329 / DSM 1819 / JCM 2831 / NBRC 15690 / NCIMB 10815 / 0-1).